The chain runs to 413 residues: Sulfoquinovose isomerase (413 aa).

5 residues coordinate 6-sulfo-beta-D-quinovose: arginine 55, tyrosine 111, asparagine 172, histidine 176, and arginine 238. Histidine 248 serves as the catalytic Proton donor/acceptor. 4 residues coordinate 6-sulfo-beta-D-quinovose: glutamate 251, glutamine 362, glutamine 379, and histidine 383. Histidine 383 functions as the Proton donor/acceptor in the catalytic mechanism.

The protein belongs to the N-acylglucosamine 2-epimerase family. In terms of assembly, homohexamer.

The catalysed reaction is 6-sulfo-beta-D-quinovose = 6-deoxy-6-sulfo-D-fructose. It catalyses the reaction 6-sulfo-beta-D-quinovose = 6-sulfo-D-rhamnose. Significantly inhibited by Cu(2+), Fe(3+) and Co(2+). Partially inhibited by Mg(2+), Ca(2+) and Mn(2+). Also inhibited by ATP, ADP, dATP, TTP and GTP. Functionally, catalyzes the isomerization of sulfoquinovose (SQ) to 6-deoxy-6-sulfo-D-fructose (SF). Can also catalyze the interconversion of SQ and sulforhamnose (SR). Has a clear preference for beta-SQ and little-to-no activity on alpha-SQ. In vitro, can also catalyze the interconversion of mannose, fructose and glucose, or lyxose and xylulose, but has extremely low activity with glucose. The protein is Sulfoquinovose isomerase (yihS) of Escherichia coli (strain K12).